The following is a 260-amino-acid chain: Snake venom serine protease serpentokallikrein-1 (260 aa).

Residues 1–18 (MVLIRVLANLLILQLSYA) form the signal peptide. Positions 19 to 24 (QRTSEL) are excised as a propeptide. Residues 25 to 251 (VIGGDECNIN…HLDWIKSIIA (227 aa)) form the Peptidase S1 domain. Cystine bridges form between Cys31–Cys165, Cys52–Cys68, Cys102–Cys258, Cys144–Cys212, Cys176–Cys191, and Cys202–Cys227. The active-site Charge relay system is the His67. 2 N-linked (GlcNAc...) asparagine glycosylation sites follow: Asn81 and Asn105. The active-site Charge relay system is the Asp112. Asn156 and Asn172 each carry an N-linked (GlcNAc...) asparagine glycan. Ser206 serves as the catalytic Charge relay system.

It belongs to the peptidase S1 family. Snake venom subfamily. As to quaternary structure, monomer. As to expression, expressed by the venom gland.

Its subcellular location is the secreted. In terms of biological role, snake venom serine protease that may act in the hemostasis system of the prey. This Protobothrops mucrosquamatus (Taiwan habu) protein is Snake venom serine protease serpentokallikrein-1.